Here is a 462-residue protein sequence, read N- to C-terminus: uncharacterized protein (462 aa).

Helical transmembrane passes span 381 to 401 and 433 to 453; these read WILG…FKGM and LWIL…NLYI.

Its subcellular location is the cell membrane. This is an uncharacterized protein from Methanocaldococcus jannaschii (strain ATCC 43067 / DSM 2661 / JAL-1 / JCM 10045 / NBRC 100440) (Methanococcus jannaschii).